A 188-amino-acid polypeptide reads, in one-letter code: Early nodulin-like protein 5 (188 aa).

The first 24 residues, 1-24 (MDSSKKIIIVMFLVTFYMFSCVSS), serve as a signal peptide directing secretion. In terms of domain architecture, Phytocyanin spans 25-128 (TEFEVGGENG…GQKMIVKVME (104 aa)). Cys82 and Cys116 are disulfide-bonded. Residues 127-157 (METESSTESPPPSSSSSSSSSSSLPASTPKA) are disordered. Residues 129–155 (TESSTESPPPSSSSSSSSSSSLPASTP) show a composition bias toward low complexity. Ser170 carries GPI-anchor amidated serine lipidation. A propeptide spans 171 to 188 (SSGFVVSAVLIVSVFGLV) (removed in mature form).

Belongs to the early nodulin-like (ENODL) family. Mostly expressed in leaves and flowers, and, to a lower extent, in stems.

Its subcellular location is the cell membrane. Its function is as follows. May act as a carbohydrate transporter. Mainly required for reproductive functions. This Arabidopsis thaliana (Mouse-ear cress) protein is Early nodulin-like protein 5.